A 203-amino-acid chain; its full sequence is Glycerol-3-phosphate acyltransferase (203 aa).

4 helical membrane-spanning segments follow: residues 6 to 26 (LTLL…AVLV), 82 to 102 (AISL…PIFF), 118 to 138 (APIG…LVLI), and 141 to 161 (YSSL…WWLD).

The protein belongs to the PlsY family. Probably interacts with PlsX.

Its subcellular location is the cell inner membrane. The enzyme catalyses an acyl phosphate + sn-glycerol 3-phosphate = a 1-acyl-sn-glycero-3-phosphate + phosphate. It functions in the pathway lipid metabolism; phospholipid metabolism. In terms of biological role, catalyzes the transfer of an acyl group from acyl-phosphate (acyl-PO(4)) to glycerol-3-phosphate (G3P) to form lysophosphatidic acid (LPA). This enzyme utilizes acyl-phosphate as fatty acyl donor, but not acyl-CoA or acyl-ACP. This is Glycerol-3-phosphate acyltransferase from Shewanella sp. (strain MR-7).